The primary structure comprises 243 residues: tRNA pseudouridine synthase A (243 aa).

The Nucleophile role is filled by D53. Y111 contributes to the substrate binding site.

The protein belongs to the tRNA pseudouridine synthase TruA family. In terms of assembly, homodimer.

The enzyme catalyses uridine(38/39/40) in tRNA = pseudouridine(38/39/40) in tRNA. Its function is as follows. Formation of pseudouridine at positions 38, 39 and 40 in the anticodon stem and loop of transfer RNAs. This is tRNA pseudouridine synthase A from Chlorobium chlorochromatii (strain CaD3).